The following is a 450-amino-acid chain: ATP-dependent protease ATPase subunit HslU (450 aa).

Residues V29, 71–76 (GVGKTE), D261, E328, and R400 contribute to the ATP site.

Belongs to the ClpX chaperone family. HslU subfamily. A double ring-shaped homohexamer of HslV is capped on each side by a ring-shaped HslU homohexamer. The assembly of the HslU/HslV complex is dependent on binding of ATP.

Its subcellular location is the cytoplasm. Functionally, ATPase subunit of a proteasome-like degradation complex; this subunit has chaperone activity. The binding of ATP and its subsequent hydrolysis by HslU are essential for unfolding of protein substrates subsequently hydrolyzed by HslV. HslU recognizes the N-terminal part of its protein substrates and unfolds these before they are guided to HslV for hydrolysis. The sequence is that of ATP-dependent protease ATPase subunit HslU from Rickettsia africae (strain ESF-5).